A 205-amino-acid polypeptide reads, in one-letter code: MPSYTLYYFNGRGRAEICRMLFAVASVQYQDKRIELAEWTQFKTKMPCHMLPILEIDTETQVPQSMAISRYLAREFGFYGKNNMDMFKVDCLCDSLFELFNDYMAVYNEKDAAKKTELQKRFQNTCLRVLPYMEKTLEANKGGAGWFIGDQILLCDMMTHAALENPIQENANLLKEYPKLAALRTRVAAHPKIAAYIKKRNNTAF.

In terms of domain architecture, GST N-terminal spans 2–80 (PSYTLYYFNG…YLAREFGFYG (79 aa)). Positions 82–205 (NNMDMFKVDC…YIKKRNNTAF (124 aa)) constitute a GST C-terminal domain.

It belongs to the GST superfamily. In terms of tissue distribution, lens.

In terms of biological role, S-crystallins are structural components of squids and octopi eye lens. Contains relatively little if any GST activity. The sequence is that of S-crystallin SL11 from Nototodarus sloanii (Wellington flying squid).